The following is a 176-amino-acid chain: MENKYSRLQISIHWLVFLLVIAAYCAMEFRGFFPRSDRPLINMIHVSCGISILVLMVVRLLLRLKYPTPPIIPKPKPMMTGLAHLGHLVIYLLFIALPVIGLVMMYNRGNPWFAFGLTMPYASEANFERVDSLKSWHETLANLGYFVIGLHAAAALAHHYFWKDNTLLRMMPRKRS.

At 1-7 (MENKYSR) the chain is on the cytoplasmic side. A helical membrane pass occupies residues 8-29 (LQISIHWLVFLLVIAAYCAMEF). A heme b-binding site is contributed by H13. Over 30–39 (RGFFPRSDRP) the chain is Periplasmic. A helical membrane pass occupies residues 40-64 (LINMIHVSCGISILVLMVVRLLLRL). Heme b is bound at residue H45. At 65-77 (KYPTPPIIPKPKP) the chain is on the cytoplasmic side. A helical transmembrane segment spans residues 78–103 (MMTGLAHLGHLVIYLLFIALPVIGLV). Residues 104–135 (MMYNRGNPWFAFGLTMPYASEANFERVDSLKS) lie on the Periplasmic side of the membrane. A helical transmembrane segment spans residues 136–158 (WHETLANLGYFVIGLHAAAALAH). Residues H137 and H151 each coordinate heme b. Residues 159–176 (HYFWKDNTLLRMMPRKRS) are Cytoplasmic-facing.

This sequence belongs to the cytochrome b561 family. As to quaternary structure, monomer. The cofactor is heme b.

The protein localises to the cell inner membrane. It catalyses the reaction a ubiquinol + 2 O2 = 2 superoxide + a ubiquinone + 2 H(+). The enzyme catalyses a menaquinol + 2 O2 = 2 superoxide + a menaquinone + 2 H(+). Its activity is regulated as follows. Quinone binding to the enzyme accelerates the reaction with superoxide. Its function is as follows. B-type di-heme cytochrome. Catalyzes the oxidation of superoxide to molecular oxygen and transfers the extracted electrons to ubiquinone through the two hemes. Can also use menaquinone. The enzyme may be responsible for the detoxification of the superoxide anion produced in the membrane or at its surface. However, it can also efficiently catalyze the formation of superoxide from ubiquinol under physiological conditions. The chain is Superoxide oxidase CybB from Escherichia coli (strain K12).